We begin with the raw amino-acid sequence, 289 residues long: DegV domain-containing protein YteA (289 aa).

Residues 3-284 enclose the DegV domain; sequence FQIMTDSTAD…DGTIAIFSIS (282 aa). Hexadecanoate contacts are provided by threonine 62 and serine 94.

May bind long-chain fatty acids, such as palmitate, and may play a role in lipid transport or fatty acid metabolism. In Lactococcus lactis subsp. lactis (strain IL1403) (Streptococcus lactis), this protein is DegV domain-containing protein YteA (yteA).